A 353-amino-acid chain; its full sequence is Protein RecA (353 aa).

80–87 (GPESSGKT) contacts ATP.

The protein belongs to the RecA family.

The protein resides in the cytoplasm. In terms of biological role, can catalyze the hydrolysis of ATP in the presence of single-stranded DNA, the ATP-dependent uptake of single-stranded DNA by duplex DNA, and the ATP-dependent hybridization of homologous single-stranded DNAs. It interacts with LexA causing its activation and leading to its autocatalytic cleavage. This is Protein RecA from Chlorobium chlorochromatii (strain CaD3).